The sequence spans 188 residues: Selenoprotein S B (188 aa).

The helical transmembrane segment at 29–49 (EALSNYGWYILLGCIVIYFLI) threads the bilayer. Basic and acidic residues predominate over residues 116-125 (TWDRMQEGKS). A disordered region spans residues 116-188 (TWDRMQEGKS…RGPSSGGSUG (73 aa)). Residues 136-147 (ASPRTSTSSSAP) show a composition bias toward low complexity. Residue Sec187 is a non-standard amino acid, selenocysteine.

Belongs to the selenoprotein S family.

It is found in the endoplasmic reticulum membrane. The protein resides in the cytoplasm. Functionally, involved in the degradation process of misfolded endoplasmic reticulum (ER) luminal proteins. Participates in the transfer of misfolded proteins from the ER to the cytosol, where they are destroyed by the proteasome in a ubiquitin-dependent manner. The protein is Selenoprotein S B (vimp-b) of Xenopus laevis (African clawed frog).